The chain runs to 309 residues: Porphobilinogen deaminase (309 aa).

An S-(dipyrrolylmethanemethyl)cysteine modification is found at cysteine 240.

Belongs to the HMBS family. In terms of assembly, monomer. It depends on dipyrromethane as a cofactor.

It carries out the reaction 4 porphobilinogen + H2O = hydroxymethylbilane + 4 NH4(+). Its pathway is porphyrin-containing compound metabolism; protoporphyrin-IX biosynthesis; coproporphyrinogen-III from 5-aminolevulinate: step 2/4. Tetrapolymerization of the monopyrrole PBG into the hydroxymethylbilane pre-uroporphyrinogen in several discrete steps. This Chromobacterium violaceum (strain ATCC 12472 / DSM 30191 / JCM 1249 / CCUG 213 / NBRC 12614 / NCIMB 9131 / NCTC 9757 / MK) protein is Porphobilinogen deaminase.